We begin with the raw amino-acid sequence, 1536 residues long: MNRSLLLRLSDTGEPITSCSYGKGVLTLPPIPLPKDAPKDQPLYTVKLLVSAGSPVARDGLVWTNCPPDHNTPFKRDKFYKKIIHSSFHEDDCIDLNVYAPGSYCFYLSFRNDNEKLETTRKYYFVALPMLYINDQFLPLNSIALQSVVSKWLGSDWEPILSKIAAKNYNMVHFTPLQERGESNSPYSIYDQLQFDQEHFKSPEDVKNLVEHIHRDLNMLSLTDIVFNHTANNSPWLVEHPEAGYNHITAPHLISAIELDQELLNFSRNLKSWGYPTELKNIEDLFKIMDGIKVHVLGSLKLWEYYAVNVQTALRDIKAHWNDESNESYSFPENIKDISSDFVKLASFVKDNVTEPNFGTLGERNSNRINVPKFIQLLKLINDGGSDDSESSLATAQNILNEVNLPLYREYDDDVSEILEQLFNRIKYLRLDDGGPKQGPVTVDVPLTEPYFTRFKGKDGTDYALANNGWIWNGNPLVDFASQNSRAYLRREVIVWGDCVKLRYGKSPEDSPYLWERMSKYIEMNAKIFDGFRIDNCHSTPIHVGEYFLDLARKYNPNLYVVAELFSGSETLDCLFVERLGISSLIREAMQAWSEEELSRLVHKHGGRPIGSYKFVPMDDFSYPADINLNEEHCFNDSNDNSIRCVSEIMIPKILTATPPHALFMDCTHDNETPFEKRTVEDTLPNAALVALCSSAIGSVYGYDEIFPHLLNLVTEKRHYDISTPTGSPSIGITKVKATLNSIRTSIGEKAYDIEDSEMHVHHQGQYITFHRMDVKSGKGWYLIARMKFSDNDDPNETLPPVVLNQSTCSLRFSYALERVGDEIPNDDKFIKGIPTKLKELEGFDISYDDSKKISTIKLPNEFPQGSIAIFETQQNGVDESLDHFIRSGALKATSSLTLESINSVLYRSEPEEYDVSAGEGGAYIIPNFGKPVYCGLQGWVSVLRKIVFYNDLAHPLSANLRNGHWALDYTISRLNYYSDEAGINEVQNWLRSRFDRVKKLPSYLVPSYFALIIGILYGCCRLKAIQLMSRNIGKSTLFVQSLSMTSIQMVSRMKSTSILPGENVPSMAAGLPHFSVNYMRCWGRDVFISLRGMLLTTGRFDEAKAHILAFAKTLKHGLIPNLLDAGRNPRYNARDAAWFFLQAVQDYVYIVPDGEKILQEQVTRRFPLDDTYIPVDDPRAFSYSSTLEEIIYEILSRHAKGIKFREANAGPNLDRVMTDKGFNVEIHVDWSTGLIHGGSQYNCGTWMDKMGESEKAGSVGIPGTPRDGAAIEINGLLKSALRFVIELKNKGLFKFSDVETQDGGRIDFTEWNQLLQDNFEKRYYVPEDPSQDADYDVSAKLGVNRRGIYRDLYKSGKPYEDYQLRPNFAIAMTVAPELFVPEHAIKAITIADEVLRGPVGMRTLDPSDYNYRPYYNNGEDSDDFATSKGRNYHQGPEWVWLYGYFLRAFHHFHFKTSPRCQNAAKEKPSSYLYQQLYYRLKGHRKWIFESVWAGLTELTNKDGEVCNDSSPTQAWSSACLLDLFYDLWDAYEDDS.

Residues D535, H538, and D670 contribute to the active site.

The protein belongs to the glycogen debranching enzyme family. Interacts with IGD1.

It localises to the mitochondrion. Its subcellular location is the cytoplasm. It carries out the reaction Transfers a segment of a (1-&gt;4)-alpha-D-glucan to a new position in an acceptor, which may be glucose or a (1-&gt;4)-alpha-D-glucan.. It catalyses the reaction Hydrolysis of (1-&gt;6)-alpha-D-glucosidic branch linkages in glycogen phosphorylase limit dextrin.. Its activity is regulated as follows. Activity is inhibited by IGD1. Multifunctional enzyme acting as 1,4-alpha-D-glucan:1,4-alpha-D-glucan 4-alpha-D-glycosyltransferase and amylo-1,6-glucosidase in glycogen degradation. This chain is Glycogen debranching enzyme (GDB1), found in Saccharomyces cerevisiae (strain ATCC 204508 / S288c) (Baker's yeast).